A 113-amino-acid polypeptide reads, in one-letter code: MTTPAVKTGLFVGLNKGHVVTRRELAPRPNSRKGKTSKRTIFIRKLIREVAGMAPYEKRITELLKVGKDKRALKVAKRKLGTHKRAKRKREEMSSVLRKMRSLGGAAAAEKKM.

Residues 78–88 show a composition bias toward basic residues; sequence RKLGTHKRAKR. Positions 78 to 113 are disordered; the sequence is RKLGTHKRAKRKREEMSSVLRKMRSLGGAAAAEKKM.

This sequence belongs to the eukaryotic ribosomal protein eL36 family.

The chain is Large ribosomal subunit protein eL36z (RPL36A) from Arabidopsis thaliana (Mouse-ear cress).